The chain runs to 932 residues: DNA mismatch repair protein MutS (932 aa).

Residue 615 to 622 (GPNMAGKS) participates in ATP binding.

The protein belongs to the DNA mismatch repair MutS family.

Its function is as follows. This protein is involved in the repair of mismatches in DNA. It is possible that it carries out the mismatch recognition step. This protein has a weak ATPase activity. The chain is DNA mismatch repair protein MutS from Clostridium botulinum (strain Loch Maree / Type A3).